The primary structure comprises 159 residues: Ankyrin repeat domain-containing protein 37 (159 aa).

ANK repeat units lie at residues Met-1–Ala-25, Gln-30–Gln-59, and Leu-63–Val-92. A Nuclear localization signal motif is present at residues Glu-130 to Val-150.

In terms of processing, ubiquitinated by the CRL2(FEM1B) complex, leading to its degradation. As to expression, expressed testis, ovary, uterus, kidney, liver, but not in other tissues.

Its subcellular location is the nucleus. It localises to the cytoplasm. In Mus musculus (Mouse), this protein is Ankyrin repeat domain-containing protein 37.